Reading from the N-terminus, the 184-residue chain is Protein PLANT CADMIUM RESISTANCE 4 (184 aa).

Positions 1–10 (MGRPGSQPNE) are enriched in polar residues. Residues 1-21 (MGRPGSQPNEAQPPPVQVQPT) are disordered. Residues 96-116 (GGLLYGMIFFIGVPFVYSCMF) traverse the membrane as a helical segment.

This sequence belongs to the cornifelin family.

It localises to the membrane. May be involved in heavy metals transport. This chain is Protein PLANT CADMIUM RESISTANCE 4 (PCR4), found in Arabidopsis thaliana (Mouse-ear cress).